We begin with the raw amino-acid sequence, 298 residues long: N-acetylmuramic acid 6-phosphate etherase (298 aa).

The 164-residue stretch at I55 to K218 folds into the SIS domain. Residue E83 is the Proton donor of the active site. E114 is a catalytic residue.

It belongs to the GCKR-like family. MurNAc-6-P etherase subfamily. Homodimer.

It carries out the reaction N-acetyl-D-muramate 6-phosphate + H2O = N-acetyl-D-glucosamine 6-phosphate + (R)-lactate. Its pathway is amino-sugar metabolism; 1,6-anhydro-N-acetylmuramate degradation. It participates in amino-sugar metabolism; N-acetylmuramate degradation. It functions in the pathway cell wall biogenesis; peptidoglycan recycling. Functionally, specifically catalyzes the cleavage of the D-lactyl ether substituent of MurNAc 6-phosphate, producing GlcNAc 6-phosphate and D-lactate. Together with AnmK, is also required for the utilization of anhydro-N-acetylmuramic acid (anhMurNAc) either imported from the medium or derived from its own cell wall murein, and thus plays a role in cell wall recycling. This is N-acetylmuramic acid 6-phosphate etherase from Escherichia coli O8 (strain IAI1).